Reading from the N-terminus, the 316-residue chain is Acetyl-coenzyme A carboxylase carboxyl transferase subunit alpha (316 aa).

The CoA carboxyltransferase C-terminal domain maps to 35 to 292 (EIEILSQKLE…KTYVLQELKD (258 aa)).

This sequence belongs to the AccA family. Acetyl-CoA carboxylase is a heterohexamer composed of biotin carboxyl carrier protein (AccB), biotin carboxylase (AccC) and two subunits each of ACCase subunit alpha (AccA) and ACCase subunit beta (AccD).

It is found in the cytoplasm. It catalyses the reaction N(6)-carboxybiotinyl-L-lysyl-[protein] + acetyl-CoA = N(6)-biotinyl-L-lysyl-[protein] + malonyl-CoA. It functions in the pathway lipid metabolism; malonyl-CoA biosynthesis; malonyl-CoA from acetyl-CoA: step 1/1. Functionally, component of the acetyl coenzyme A carboxylase (ACC) complex. First, biotin carboxylase catalyzes the carboxylation of biotin on its carrier protein (BCCP) and then the CO(2) group is transferred by the carboxyltransferase to acetyl-CoA to form malonyl-CoA. The polypeptide is Acetyl-coenzyme A carboxylase carboxyl transferase subunit alpha (Alkaliphilus oremlandii (strain OhILAs) (Clostridium oremlandii (strain OhILAs))).